A 571-amino-acid polypeptide reads, in one-letter code: Potassium-transporting ATPase potassium-binding subunit (571 aa).

The next 12 membrane-spanning stretches (helical) occupy residues 5–25 (GWMQIALYGAVVLALVRPLGG), 64–84 (LAYAGAMILFNVAGFVLLYAL), 136–156 (GLTHQNFVSAASGMAVAVALI), 179–199 (LYVLLPLSTVLALFYVSQGMP), 220–240 (VGPVASQVAIKMLGTNGGGFF), 254–274 (LSNFLQMLSIFVIGAALTNVF), 285–305 (WAILAAMGLLFLAGVTVTYWA), 330–350 (FGIAASALFAVITTAASCGAV), 375–395 (IIGGVGAGLYGMLVFVVVAIF), 421–441 (MLGILCLPLMMLGFTAIATVV), 488–508 (LAIGMLVGRFFVKIPVLAIAG), and 527–547 (GGLFVGLLVGVVLIIGGLTFF).

The protein belongs to the KdpA family. As to quaternary structure, the system is composed of three essential subunits: KdpA, KdpB and KdpC.

Its subcellular location is the cell inner membrane. Its function is as follows. Part of the high-affinity ATP-driven potassium transport (or Kdp) system, which catalyzes the hydrolysis of ATP coupled with the electrogenic transport of potassium into the cytoplasm. This subunit binds the periplasmic potassium ions and delivers the ions to the membrane domain of KdpB through an intramembrane tunnel. The chain is Potassium-transporting ATPase potassium-binding subunit from Methylorubrum extorquens (strain CM4 / NCIMB 13688) (Methylobacterium extorquens).